We begin with the raw amino-acid sequence, 458 residues long: Phosphoglucosamine mutase (458 aa).

Catalysis depends on S106, which acts as the Phosphoserine intermediate. Residues S106, D247, D249, and D251 each contribute to the Mg(2+) site. S106 bears the Phosphoserine mark.

The protein belongs to the phosphohexose mutase family. The cofactor is Mg(2+). Activated by phosphorylation.

It catalyses the reaction alpha-D-glucosamine 1-phosphate = D-glucosamine 6-phosphate. In terms of biological role, catalyzes the conversion of glucosamine-6-phosphate to glucosamine-1-phosphate. This Chlamydia trachomatis serovar D (strain ATCC VR-885 / DSM 19411 / UW-3/Cx) protein is Phosphoglucosamine mutase.